A 430-amino-acid chain; its full sequence is Ribosomal protein uS12 methylthiotransferase RimO (430 aa).

The MTTase N-terminal domain maps to 1 to 116 (MRVGIKVLGC…IANALEKGTD (116 aa)). C10, C46, C79, C148, C152, and C155 together coordinate [4Fe-4S] cluster. A Radical SAM core domain is found at 134–365 (LEERPYAYVK…LLQAEISNSR (232 aa)). The TRAM domain maps to 367-430 (DRFIGRKLKF…DEYDMWGSVT (64 aa)).

This sequence belongs to the methylthiotransferase family. RimO subfamily. [4Fe-4S] cluster serves as cofactor.

The protein resides in the cytoplasm. It catalyses the reaction L-aspartate(89)-[ribosomal protein uS12]-hydrogen + (sulfur carrier)-SH + AH2 + 2 S-adenosyl-L-methionine = 3-methylsulfanyl-L-aspartate(89)-[ribosomal protein uS12]-hydrogen + (sulfur carrier)-H + 5'-deoxyadenosine + L-methionine + A + S-adenosyl-L-homocysteine + 2 H(+). Its function is as follows. Catalyzes the methylthiolation of an aspartic acid residue of ribosomal protein uS12. This chain is Ribosomal protein uS12 methylthiotransferase RimO, found in Thermotoga sp. (strain RQ2).